The following is a 1034-amino-acid chain: N-acetyl-beta-glucosaminyl-glycoprotein 4-beta-N-acetylgalactosaminyltransferase 1 (1034 aa).

Residues 1–12 (MPWFPVKKVRKQ) are Cytoplasmic-facing. The chain crosses the membrane as a helical; Signal-anchor for type II membrane protein span at residues 13–31 (MKLLLLLLLLTCAAWLTYV). The Lumenal portion of the chain corresponds to 32-1034 (HRSLVRPGRA…SRKGARAQRS (1003 aa)). The segment at 51-104 (DGEKLTGVTDSRGVRVPSSTQRSEDSSESHEEEQAPEGRGPNMLFPGGPRKPPP) is disordered. A compositionally biased stretch (basic and acidic residues) spans 72-83 (RSEDSSESHEEE). An N-linked (GlcNAc...) asparagine glycan is attached at Asn106. One can recognise a PA14 domain in the interval 109–279 (HQTPPWREEF…LKFEIIDSAH (171 aa)). 2 disordered regions span residues 450–486 (PTDASVQQSHRTPTPAASTGTTASPTPPTTSPLDEQT) and 556–600 (RVQL…QLHG). Residues 461-473 (TPTPAASTGTTAS) are compositionally biased toward low complexity. Asn611 is a glycosylation site (N-linked (GlcNAc...) asparagine). Disordered stretches follow at residues 626 to 669 (SQVS…PLGR) and 782 to 801 (GDEDGESPEPPPAASIHPDS). A compositionally biased stretch (acidic residues) spans 636–661 (EGEEGEEDGAPGDEATSEDSEEEEEP).

Belongs to the chondroitin N-acetylgalactosaminyltransferase family.

The protein resides in the golgi apparatus. Its subcellular location is the golgi stack membrane. It catalyses the reaction an N-acetyl-beta-D-glucosaminyl derivative + UDP-N-acetyl-alpha-D-galactosamine = an N-acetyl-beta-D-galactosaminyl-(1-&gt;4)-N-acetyl-beta-D-glucosaminyl derivative + UDP + H(+). Functionally, transfers N-acetylgalactosamine (GalNAc) from UDP-GalNAc to N-acetylglucosamine-beta-benzyl with a beta-1,4-linkage to form N,N'-diacetyllactosediamine, GalNAc-beta-1,4-GlcNAc structures in N-linked glycans and probably O-linked glycans. The polypeptide is N-acetyl-beta-glucosaminyl-glycoprotein 4-beta-N-acetylgalactosaminyltransferase 1 (B4galnt4) (Mus musculus (Mouse)).